The chain runs to 427 residues: Enolase (427 aa).

(2R)-2-phosphoglycerate is bound at residue Gln-163. Glu-205 serves as the catalytic Proton donor. 3 residues coordinate Mg(2+): Asp-242, Glu-283, and Asp-310. Residues Lys-335, Arg-364, Ser-365, and Lys-386 each contribute to the (2R)-2-phosphoglycerate site. The Proton acceptor role is filled by Lys-335.

Belongs to the enolase family. Mg(2+) serves as cofactor.

It localises to the cytoplasm. Its subcellular location is the secreted. The protein resides in the cell surface. The catalysed reaction is (2R)-2-phosphoglycerate = phosphoenolpyruvate + H2O. The protein operates within carbohydrate degradation; glycolysis; pyruvate from D-glyceraldehyde 3-phosphate: step 4/5. Its function is as follows. Catalyzes the reversible conversion of 2-phosphoglycerate (2-PG) into phosphoenolpyruvate (PEP). It is essential for the degradation of carbohydrates via glycolysis. This chain is Enolase, found in Salinispora arenicola (strain CNS-205).